The chain runs to 71 residues: Phosphatidylinositol N-acetylglucosaminyltransferase subunit Y (71 aa).

Residues 1-3 (MFL) are Cytoplasmic-facing. Residues 4-26 (SLPMLTVLIPLVSLAGLFYSASV) form a helical membrane-spanning segment. The Lumenal portion of the chain corresponds to 27–44 (EDDFPQGCTSTTSLCFYS). Residues 45 to 65 (LLLPITIPVYVFFHLWTWMGI) traverse the membrane as a helical segment. The Cytoplasmic segment spans residues 66 to 71 (KLFRHN).

As to quaternary structure, component of the glycosylphosphatidylinositol-N-acetylglucosaminyltransferase (GPI-GnT) complex composed at least by PIGA, PIGC, PIGH, PIGP, PIGQ, PIGY and DPM2. Interacts directly with PIGA; this interaction regulates glycosylphosphatidylinositol-N-acetylglucosaminyltransferase activity. Does not interact with Ras proteins.

Its subcellular location is the endoplasmic reticulum membrane. It participates in glycolipid biosynthesis; glycosylphosphatidylinositol-anchor biosynthesis. Functionally, part of the glycosylphosphatidylinositol-N-acetylglucosaminyltransferase (GPI-GnT) complex that catalyzes the transfer of N-acetylglucosamine from UDP-N-acetylglucosamine to phosphatidylinositol and participates in the first step of GPI biosynthesis. May act by regulating the catalytic subunit PIGA. The sequence is that of Phosphatidylinositol N-acetylglucosaminyltransferase subunit Y from Bos taurus (Bovine).